A 78-amino-acid polypeptide reads, in one-letter code: U7-lycotoxin-Ls1d (78 aa).

A signal peptide spans 1–22 (MKLIIFTGLALLLIVSLIDVEA). Residues 23-26 (QNEG) constitute a propeptide that is removed on maturation.

It belongs to the neurotoxin 19 (CSTX) family. 07 (U7-Lctx) subfamily. In terms of processing, contains 4 disulfide bonds. In terms of tissue distribution, expressed by the venom gland.

Its subcellular location is the secreted. In Lycosa singoriensis (Wolf spider), this protein is U7-lycotoxin-Ls1d.